The sequence spans 420 residues: ATP phosphoribosyltransferase regulatory subunit (420 aa).

The protein belongs to the class-II aminoacyl-tRNA synthetase family. HisZ subfamily. In terms of assembly, heteromultimer composed of HisG and HisZ subunits.

The protein resides in the cytoplasm. It functions in the pathway amino-acid biosynthesis; L-histidine biosynthesis; L-histidine from 5-phospho-alpha-D-ribose 1-diphosphate: step 1/9. In terms of biological role, required for the first step of histidine biosynthesis. May allow the feedback regulation of ATP phosphoribosyltransferase activity by histidine. In Bacillus cereus (strain G9842), this protein is ATP phosphoribosyltransferase regulatory subunit.